Here is a 195-residue protein sequence, read N- to C-terminus: Large ribosomal subunit protein uL11m (195 aa).

This sequence belongs to the universal ribosomal protein uL11 family. As to quaternary structure, component of the mitochondrial ribosome large subunit (39S) which comprises a 16S rRNA and about 50 distinct proteins.

The protein localises to the mitochondrion. In Caenorhabditis elegans, this protein is Large ribosomal subunit protein uL11m (mrpl-11).